The following is a 243-amino-acid chain: Nuclear ubiquitous casein and cyclin-dependent kinase substrate 1 (243 aa).

Residues M1–D243 are disordered. Residue Y13 is modified to Phosphotyrosine. A phosphoserine mark is found at S14 and S19. The residue at position 26 (Y26) is a Phosphotyrosine. Basic residues predominate over residues K35–G51. Phosphoserine is present on residues S54, S58, S61, S73, S75, and S79. A compositionally biased stretch (basic and acidic residues) spans K64–E77. Low complexity predominate over residues Q91 to A100. Positions V111–P124 are enriched in acidic residues. Phosphoserine is present on residues S113, S130, S132, and S144. The span at S132–D145 shows a compositional bias: acidic residues. The segment covering S149–L174 has biased composition (basic residues). Phosphothreonine is present on T179. A Phosphoserine modification is found at S181. Over residues A197–K206 the composition is skewed to basic and acidic residues. Position 202 is a phosphothreonine (T202). Phosphoserine is present on residues S204, S214, S223, S229, S234, and S240. Residues E232–D243 show a composition bias toward acidic residues.

As to quaternary structure, does not interact with RAD51. Post-translationally, phosphorylated in an ATM-dependent manner in response to DNA damage. Phosphorylated by CDK1 and casein kinase.

Its subcellular location is the nucleus. It localises to the chromosome. Functionally, chromatin-associated protein involved in DNA repair by promoting homologous recombination (HR). Binds double-stranded DNA (dsDNA) and secondary DNA structures, such as D-loop structures, but with less affinity than RAD51AP1. The sequence is that of Nuclear ubiquitous casein and cyclin-dependent kinase substrate 1 (NUCKS1) from Bos taurus (Bovine).